A 260-amino-acid chain; its full sequence is Phosphatidate cytidylyltransferase (260 aa).

Transmembrane regions (helical) follow at residues 9–29 (IIAL…LMLF), 46–66 (MIKF…IIML), 70–90 (AGSW…FILL), 102–122 (FMDA…FMYL), 130–150 (LHYI…AYIF), 172–192 (FVGG…FVDF), and 196–216 (LWLL…GDLV).

Belongs to the CDS family.

The protein resides in the cell membrane. It catalyses the reaction a 1,2-diacyl-sn-glycero-3-phosphate + CTP + H(+) = a CDP-1,2-diacyl-sn-glycerol + diphosphate. It functions in the pathway phospholipid metabolism; CDP-diacylglycerol biosynthesis; CDP-diacylglycerol from sn-glycerol 3-phosphate: step 3/3. The sequence is that of Phosphatidate cytidylyltransferase (cdsA) from Staphylococcus saprophyticus subsp. saprophyticus (strain ATCC 15305 / DSM 20229 / NCIMB 8711 / NCTC 7292 / S-41).